An 87-amino-acid polypeptide reads, in one-letter code: Histone H1.C6/H1.C9 (87 aa).

The tract at residues 1-87 (MSDAAVPPKK…KKAVKKAPKK (87 aa)) is disordered. The segment covering 11 to 87 (ASPKKASPKK…KKAVKKAPKK (77 aa)) has biased composition (basic residues).

It is found in the nucleus. The protein localises to the chromosome. The sequence is that of Histone H1.C6/H1.C9 from Trypanosoma cruzi.